The primary structure comprises 1048 residues: Ankyrin repeat domain-containing protein 27 (1048 aa).

A sufficient for GEF activity towards RAB21 region spans residues 1 to 372 (MALYDEDLLK…RQGSLSTKTP (372 aa)). Positions 233 to 371 (ASEDAAFNKI…IRQGSLSTKT (139 aa)) constitute a VPS9 domain. ANK repeat units lie at residues 396–426 (TPID…DKDA), 462–491 (RGQT…VVNA), 495–524 (HGST…STEV), 528–557 (NGNT…QACR), 564–593 (KGDT…PTAV), and 597–627 (LKET…RPRP). The interval 396 to 460 (TPIDCLFKHI…PSVVTPFSRD (65 aa)) is sufficient for interaction with VPS29. Residues 451–600 (PSVVTPFSRD…TAVQNRLKET (150 aa)) are interaction with RAB38. An interaction with RAB32 region spans residues 451–729 (PSVVTPFSRD…CAPAQKLARI (279 aa)). Residues 618 to 627 (HLSSDRRPRP) are compositionally biased toward basic and acidic residues. The disordered stretch occupies residues 618 to 650 (HLSSDRRPRPSEVPAQSPTRSVDSISQGSSTSS). A compositionally biased stretch (low complexity) spans 638–650 (SVDSISQGSSTSS). The interval 658–707 (FRQEEVKKDYREVEKLLRAVADGDLEMVRYLLEWTEDDLDDVEDAISTVD) is required for interaction with VAMP7. ANK repeat units lie at residues 668 to 698 (REVE…DLDD), 742 to 771 (DGFS…YSGA), 775 to 804 (SQAV…KPNK), 808 to 837 (SGNT…SINA), and 841 to 870 (KGNT…SVDI). The tract at residues 692–745 (TEDDLDDVEDAISTVDLEFCHPLCQCPKCAPAQKLARISANGLSVNVTNQDGFS) is sufficient for interaction with VPS29. The segment covering 949 to 962 (ERTSRETMGRDRSV) has biased composition (basic and acidic residues). The tract at residues 949 to 1019 (ERTSRETMGR…AAPGHRPMVR (71 aa)) is disordered. A phosphoserine mark is found at serine 961 and serine 969. Residues 979 to 995 (TGKQSDLSDLSRYQTSE) show a composition bias toward polar residues. Positions 996–1006 (EGNKGLPERPV) are enriched in basic and acidic residues. At threonine 1022 the chain carries Phosphothreonine.

Interacts with RAB21 (GDP-bound form), VPS29, KIF5A, KIF5C, GOLGA4. Interacts with RAB32 (GTP-bound form), RAB38 (GTP-bound form), VAMP7. Interacts with low affinity with RAB5. ANKRD27:RAB32 heterodimers can homodimerize to form tetramers. Can interact with RAB38 or RAB32, VPS29 and VAMP7 simultaneously. A decreased interaction with RAB32 seen in the presence of SGSM2.

It is found in the early endosome. The protein localises to the late endosome. It localises to the cytoplasmic vesicle membrane. The protein resides in the lysosome. Its subcellular location is the cell membrane. It is found in the melanosome. The protein localises to the cytoplasmic vesicle. Its function is as follows. May be a guanine exchange factor (GEF) for Rab21, Rab32 and Rab38 and regulate endosome dynamics. May regulate the participation of VAMP7 in membrane fusion events; in vitro inhibits VAMP7-mediated SNARE complex formation by trapping VAMP7 in a closed, fusogenically inactive conformation. Involved in peripheral melanosomal distribution of TYRP1 in melanocytes; the function, which probably is implicating vesicle-trafficking, includes cooperation with Rab32, Rab38 and VAMP7. Involved in the regulation of neurite growth; the function seems to require its GEF activity, probably towards Rab21, and VAMP7 but not Rab32/38. Proposed to be involved in Golgi sorting of VAMP7 and transport of VAMP7 vesicles to the cell surface; the function seems to implicate kinesin heavy chain isoform 5 proteins, GOLGA4, RAB21 and MACF1. Required for the colocalization of VAMP7 and Rab21, probably on TGN sites. Involved in GLUT1 endosome-to-plasma membrane trafficking; the function is dependent of association with VPS29. Regulates the proper trafficking of melanogenic enzymes TYR, TYRP1 and DCT/TYRP2 to melanosomes in melanocytes. The polypeptide is Ankyrin repeat domain-containing protein 27 (Ankrd27) (Mus musculus (Mouse)).